Here is a 70-residue protein sequence, read N- to C-terminus: Large ribosomal subunit protein bL31 (70 aa).

Residues C16, C18, C37, and C40 each contribute to the Zn(2+) site.

This sequence belongs to the bacterial ribosomal protein bL31 family. Type A subfamily. In terms of assembly, part of the 50S ribosomal subunit. Zn(2+) serves as cofactor.

Binds the 23S rRNA. This chain is Large ribosomal subunit protein bL31, found in Glaesserella parasuis serovar 5 (strain SH0165) (Haemophilus parasuis).